The following is a 247-amino-acid chain: PF03932 family protein CutC (247 aa).

It belongs to the CutC family.

The protein resides in the cytoplasm. The protein is PF03932 family protein CutC of Enterobacter sp. (strain 638).